We begin with the raw amino-acid sequence, 998 residues long: Bifunctional glutamine synthetase adenylyltransferase/adenylyl-removing enzyme (998 aa).

Residues 1-487 form an adenylyl removase region; sequence MVVTKPATQR…LHAKLFYQPL (487 aa). The segment at 492–998 is adenylyl transferase; sequence GPAGLEIRHG…KAVVRKVFGS (507 aa).

Belongs to the GlnE family. Requires Mg(2+) as cofactor.

It carries out the reaction [glutamine synthetase]-O(4)-(5'-adenylyl)-L-tyrosine + phosphate = [glutamine synthetase]-L-tyrosine + ADP. It catalyses the reaction [glutamine synthetase]-L-tyrosine + ATP = [glutamine synthetase]-O(4)-(5'-adenylyl)-L-tyrosine + diphosphate. Its function is as follows. Involved in the regulation of glutamine synthetase GlnA, a key enzyme in the process to assimilate ammonia. When cellular nitrogen levels are high, the C-terminal adenylyl transferase (AT) inactivates GlnA by covalent transfer of an adenylyl group from ATP to specific tyrosine residue of GlnA, thus reducing its activity. Conversely, when nitrogen levels are low, the N-terminal adenylyl removase (AR) activates GlnA by removing the adenylyl group by phosphorolysis, increasing its activity. The regulatory region of GlnE binds the signal transduction protein PII (GlnB) which indicates the nitrogen status of the cell. The sequence is that of Bifunctional glutamine synthetase adenylyltransferase/adenylyl-removing enzyme from Mycobacterium avium (strain 104).